The chain runs to 504 residues: uncharacterized protein (504 aa).

The tract at residues 431–483 is disordered; it reads GEAEKYRKLQDGDEDEEGTGKPEPKKARRKGFGGKFAPKHEEKVTRAVGVNSE.

This sequence belongs to the CBF/MAK21 family.

This is an uncharacterized protein from Caenorhabditis elegans.